Here is a 367-residue protein sequence, read N- to C-terminus: Aminomethyltransferase (367 aa).

This sequence belongs to the GcvT family. In terms of assembly, the glycine cleavage system is composed of four proteins: P, T, L and H.

The enzyme catalyses N(6)-[(R)-S(8)-aminomethyldihydrolipoyl]-L-lysyl-[protein] + (6S)-5,6,7,8-tetrahydrofolate = N(6)-[(R)-dihydrolipoyl]-L-lysyl-[protein] + (6R)-5,10-methylene-5,6,7,8-tetrahydrofolate + NH4(+). In terms of biological role, the glycine cleavage system catalyzes the degradation of glycine. The polypeptide is Aminomethyltransferase (Shouchella clausii (strain KSM-K16) (Alkalihalobacillus clausii)).